Consider the following 165-residue polypeptide: PRPTRPDKARRLGYKAKQGYVIYRVRVRRGGRKRPVPKGATYGKPVHHGVNQLKFARSLQSVAEERAGRHCGALRVLNSYWVGEDSTYKFFEVILIDPFHKRIRRNPDTQWITKPVHKHREMRGLTSAGRKSRGLGKGHKFHHTIGGSRRAAWRRRNTLQLHRYR.

The segment at 126 to 147 (TSAGRKSRGLGKGHKFHHTIGG) is disordered. Residues 130 to 143 (RKSRGLGKGHKFHH) show a composition bias toward basic residues.

The protein belongs to the eukaryotic ribosomal protein eL15 family. In terms of assembly, component of the large ribosomal subunit.

The protein localises to the cytoplasm. Component of the large ribosomal subunit. The ribosome is a large ribonucleoprotein complex responsible for the synthesis of proteins in the cell. This Gallus gallus (Chicken) protein is Large ribosomal subunit protein eL15 (RPL15).